The following is a 177-amino-acid chain: Dual-action ribosomal maturation protein DarP (177 aa).

This sequence belongs to the DarP family.

It is found in the cytoplasm. Its function is as follows. Member of a network of 50S ribosomal subunit biogenesis factors which assembles along the 30S-50S interface, preventing incorrect 23S rRNA structures from forming. Promotes peptidyl transferase center (PTC) maturation. The polypeptide is Dual-action ribosomal maturation protein DarP (Glaesserella parasuis serovar 5 (strain SH0165) (Haemophilus parasuis)).